We begin with the raw amino-acid sequence, 129 residues long: Small ribosomal subunit protein uS11 (129 aa).

Belongs to the universal ribosomal protein uS11 family. Part of the 30S ribosomal subunit. Interacts with proteins S7 and S18. Binds to IF-3.

Located on the platform of the 30S subunit, it bridges several disparate RNA helices of the 16S rRNA. Forms part of the Shine-Dalgarno cleft in the 70S ribosome. The polypeptide is Small ribosomal subunit protein uS11 (Geobacillus thermodenitrificans (strain NG80-2)).